The sequence spans 460 residues: Interleukin-6 receptor subunit alpha (460 aa).

An N-terminal signal peptide occupies residues 1–19 (MLTVGCTLLVALLAAPAVA). The Ig-like C2-type domain occupies 20–116 (LVLGSCRALE…DVPPEEPKLS (97 aa)). The Extracellular segment spans residues 20 to 364 (LVLGSCRALE…VQESSSMSLP (345 aa)). 4 cysteine pairs are disulfide-bonded: cysteine 25/cysteine 190, cysteine 47/cysteine 92, cysteine 117/cysteine 128, and cysteine 162/cysteine 173. Asparagine 32 and asparagine 55 each carry an N-linked (GlcNAc...) asparagine glycan. Fibronectin type-III domains lie at 109–214 (PPEE…VQPD) and 215–313 (PPAN…TPWI). Asparagine 150 carries an N-linked (GlcNAc...) asparagine glycan. Residue asparagine 218 is glycosylated (N-linked (GlcNAc...) asparagine). The short motif at 300 to 304 (WSEWS) is the WSXWS motif element. The helical transmembrane segment at 365–385 (TFLVAGGSLAFGLLLCVFIIL) threads the bilayer. At 386-460 (RLKQKWKSEA…NSNRDYLFPR (75 aa)) the chain is on the cytoplasmic side.

It belongs to the type I cytokine receptor family. Type 3 subfamily. Component of a hexamer of two molecules each of IL6, IL6R and IL6ST; first binds to IL6 to associate with the signaling subunit IL6ST. Interacts (via N-terminal ectodomain) with SORL1; this interaction may affect IL6-binding to IL6R, hence decrease IL6 'classic-signaling'. As to quaternary structure, also interacts with SORL1; this interaction leads to soluble IL6R internalization. May form a trimeric complex with the soluble SORL1 ectodomain and circulating IL6 receptor; this interaction might stabilize circulating IL6, hence promote IL6 'trans-signaling'. In terms of processing, a short soluble form is also released from the membrane by proteolysis. The sIL6R is formed by limited proteolysis of membrane-bound receptors, a process referred to as ectodomain shedding. mIL6R is cleaved by the proteases ADAM10 and ADAM17. Post-translationally, glycosylated. Glycosylation is dispensable for transport, signaling, and cell-surface turnover. Glycosylation at Asn-55 is a protease-regulatory exosite. Glycosylation is required for ADAM17-mediated proteolysis. As to expression, expressed by dendritic cells. Detected in the cerebrospinal fluid.

The protein localises to the cell membrane. Its subcellular location is the secreted. Its activity is regulated as follows. Classic and trans-signaling are both inhibited by tocilizumab, a humanized monoclonal antibody that blocks interleukin IL6R signaling. Its function is as follows. Part of the receptor for interleukin 6. Binds to IL6 with low affinity, but does not transduce a signal. Signal activation necessitate an association with IL6ST. Activation leads to the regulation of the immune response, acute-phase reactions and hematopoiesis. The interaction with membrane-bound IL6R and IL6ST stimulates 'classic signaling', the restricted expression of the IL6R limits classic IL6 signaling to only a few tissues such as the liver and some cells of the immune system. Whereas the binding of IL6 and soluble IL6R to IL6ST stimulates 'trans-signaling'. Alternatively, 'cluster signaling' occurs when membrane-bound IL6:IL6R complexes on transmitter cells activate IL6ST receptors on neighboring receiver cells. Signaling via the membrane-bound IL6R is mostly regenerative and anti-inflammatory. Drives naive CD4(+) T cells to the Th17 lineage, through 'cluster signaling' by dendritic cells. Functionally, soluble form of IL6 receptor (sIL6R) that acts as an agonist of IL6 activity. The IL6:sIL6R complex (hyper-IL6) binds to IL6ST/gp130 on cell surfaces and induces signaling also on cells that do not express membrane-bound IL6R in a process called IL6 'trans-signaling'. sIL6R is causative for the pro-inflammatory properties of IL6 and an important player in the development of chronic inflammatory diseases. In complex with IL6, is required for induction of VEGF production. Plays a protective role during liver injury, being required for maintenance of tissue regeneration. 'Trans-signaling' in central nervous system regulates energy and glucose homeostasis. This chain is Interleukin-6 receptor subunit alpha, found in Mus musculus (Mouse).